Here is a 357-residue protein sequence, read N- to C-terminus: tRNA N6-adenosine threonylcarbamoyltransferase (357 aa).

2 residues coordinate Fe cation: His-113 and His-117. Substrate contacts are provided by residues 136–140 (LVSGG), Asp-169, Gly-182, and Asn-288. Residue Asp-316 coordinates Fe cation.

Belongs to the KAE1 / TsaD family. The cofactor is Fe(2+).

It is found in the cytoplasm. The catalysed reaction is L-threonylcarbamoyladenylate + adenosine(37) in tRNA = N(6)-L-threonylcarbamoyladenosine(37) in tRNA + AMP + H(+). Its function is as follows. Required for the formation of a threonylcarbamoyl group on adenosine at position 37 (t(6)A37) in tRNAs that read codons beginning with adenine. Is involved in the transfer of the threonylcarbamoyl moiety of threonylcarbamoyl-AMP (TC-AMP) to the N6 group of A37, together with TsaE and TsaB. TsaD likely plays a direct catalytic role in this reaction. The chain is tRNA N6-adenosine threonylcarbamoyltransferase from Gemmatimonas aurantiaca (strain DSM 14586 / JCM 11422 / NBRC 100505 / T-27).